The chain runs to 101 residues: Large ribosomal subunit protein uL23 (101 aa).

It belongs to the universal ribosomal protein uL23 family. Part of the 50S ribosomal subunit. Contacts protein L29, and trigger factor when it is bound to the ribosome.

Functionally, one of the early assembly proteins it binds 23S rRNA. One of the proteins that surrounds the polypeptide exit tunnel on the outside of the ribosome. Forms the main docking site for trigger factor binding to the ribosome. The sequence is that of Large ribosomal subunit protein uL23 from Aromatoleum aromaticum (strain DSM 19018 / LMG 30748 / EbN1) (Azoarcus sp. (strain EbN1)).